Reading from the N-terminus, the 229-residue chain is Vacuolar protein sorting-associated protein 24 homolog 1 (229 aa).

Positions 15-60 (KQLLRDWQRKLRQECRNIERQIRDIQKEERNVQKAIKEAAKRNDMV) form a coiled coil. Residues 193 to 215 (VPAQKASTSREEEAVAEGVDDEE) are disordered. Positions 206–215 (AVAEGVDDEE) are enriched in acidic residues.

This sequence belongs to the SNF7 family. As to quaternary structure, component of the endosomal sorting required for transport complex III (ESCRT-III), composed at least of VPS2, VPS20, VPS24 and VPS32. Interacts with SKD1.

Its subcellular location is the endosome. Functionally, component of the ESCRT-III complex, which is required for multivesicular bodies (MVBs) formation and sorting of endosomal cargo proteins into MVBs. The ESCRT-III complex is probably involved in the concentration of MVB cargo. The polypeptide is Vacuolar protein sorting-associated protein 24 homolog 1 (VPS24-1) (Arabidopsis thaliana (Mouse-ear cress)).